Reading from the N-terminus, the 514-residue chain is Anthranilate synthase component 1 (514 aa).

L-tryptophan is bound by residues T40 and 290–292; that span reads PYM. 327–328 contacts chorismate; it reads GT. E360 is a binding site for Mg(2+). Chorismate-binding positions include Y448, R468, 482–484, and G484; that span reads GAG. E497 provides a ligand contact to Mg(2+).

It belongs to the anthranilate synthase component I family. Heterotetramer consisting of two non-identical subunits: a beta subunit (TrpG) and a large alpha subunit (TrpE). Mg(2+) serves as cofactor.

The enzyme catalyses chorismate + L-glutamine = anthranilate + pyruvate + L-glutamate + H(+). It participates in amino-acid biosynthesis; L-tryptophan biosynthesis; L-tryptophan from chorismate: step 1/5. Feedback inhibited by tryptophan. Functionally, part of a heterotetrameric complex that catalyzes the two-step biosynthesis of anthranilate, an intermediate in the biosynthesis of L-tryptophan. In the first step, the glutamine-binding beta subunit (TrpG) of anthranilate synthase (AS) provides the glutamine amidotransferase activity which generates ammonia as a substrate that, along with chorismate, is used in the second step, catalyzed by the large alpha subunit of AS (TrpE) to produce anthranilate. In the absence of TrpG, TrpE can synthesize anthranilate directly from chorismate and high concentrations of ammonia. The sequence is that of Anthranilate synthase component 1 (trpE) from Buchnera aphidicola subsp. Rhopalosiphum padi.